The following is a 271-amino-acid chain: tRNA (guanine-N(7)-)-methyltransferase (271 aa).

The disordered stretch occupies residues 1–52 (MSDSHHTPEAASASLRHVRAKGEPRFPDGPKADPAGSHFERRIRSFQPRRSR). Over residues 20-31 (AKGEPRFPDGPK) the composition is skewed to basic and acidic residues. Positions 93, 118, 145, and 168 each coordinate S-adenosyl-L-methionine. The active site involves aspartate 168. Substrate contacts are provided by residues lysine 172, aspartate 204, and 241-244 (TRFE).

Belongs to the class I-like SAM-binding methyltransferase superfamily. TrmB family.

The enzyme catalyses guanosine(46) in tRNA + S-adenosyl-L-methionine = N(7)-methylguanosine(46) in tRNA + S-adenosyl-L-homocysteine. It participates in tRNA modification; N(7)-methylguanine-tRNA biosynthesis. Catalyzes the formation of N(7)-methylguanine at position 46 (m7G46) in tRNA. This chain is tRNA (guanine-N(7)-)-methyltransferase, found in Streptomyces coelicolor (strain ATCC BAA-471 / A3(2) / M145).